A 507-amino-acid polypeptide reads, in one-letter code: Sugar transport protein 6 (507 aa).

Over 1–20 the chain is Cytoplasmic; it reads MAVVVSNANAPAFEAKMTVY. The next 12 helical transmembrane spans lie at 21 to 41, 78 to 98, 115 to 135, 138 to 158, 165 to 185, 199 to 219, 280 to 300, 318 to 338, 345 to 365, 381 to 401, 418 to 438, and 447 to 467; these read VFIC…DIGI, FLQL…FVAS, IFFL…MLII, LFLG…LSEI, GGLN…ANIV, IALG…LLII, FIIG…AIMF, LSAV…IYLV, FLLL…GIIL, LVVV…WGPL, GFAV…QAFL, and GIFF…FFFI. The Cytoplasmic segment spans residues 468–507; it reads PETKGIAIDDMRESVWKPHWFWKRYMLPEDDHHDIEKRNA.

The protein belongs to the major facilitator superfamily. Sugar transporter (TC 2.A.1.1) family. As to expression, pollen specific.

It localises to the membrane. With respect to regulation, inhibited by uncouplers such as 2,4-dinitrophenol and carbonyl cyanide-m-chlorophenyl-hydrazone. Its function is as follows. Mediates an active uptake of hexoses, probably by sugar/hydrogen symport. Can transport glucose, 3-O-methylglucose, mannose, fructose and galactose, and, to a lower extent, xylose and ribulose. This Arabidopsis thaliana (Mouse-ear cress) protein is Sugar transport protein 6 (STP6).